We begin with the raw amino-acid sequence, 490 residues long: Gallate decarboxylase (490 aa).

Aspartate 165 contributes to the Mn(2+) binding site. Residues 168–170 (IHR) and glycine 187 contribute to the prenylated FMN site. Residue glutamate 233 coordinates Mn(2+). The Proton acceptor role is filled by glutamate 289.

This sequence belongs to the UbiD family. It depends on prenylated FMN as a cofactor. The cofactor is Mn(2+).

The catalysed reaction is 3,4,5-trihydroxybenzoate + H(+) = 1,2,3-trihydroxybenzene + CO2. It catalyses the reaction 3,4-dihydroxybenzoate + H(+) = catechol + CO2. Functionally, involved in tannin degradation. Catalyzes the decarboxylation of gallic acid and protocatechuic acid to pyrogallol and catechol, respectively. The protein is Gallate decarboxylase of Lactiplantibacillus plantarum (strain ATCC BAA-793 / NCIMB 8826 / WCFS1) (Lactobacillus plantarum).